The primary structure comprises 227 residues: Terpene cyclase ltmB (227 aa).

Helical transmembrane passes span 20–40 (LAET…VLMI), 51–71 (MALI…IIYP), 76–96 (VELA…TSAA), 113–133 (AGLI…ALAM), 135–155 (IGPA…LSIG), 173–195 (LWSS…WRYW), and 206–226 (LILW…VCLL).

This sequence belongs to the paxB family.

It is found in the membrane. The protein operates within secondary metabolite biosynthesis. Its function is as follows. Terpene cyclase; part of the gene cluster that mediates the biosynthesis of lolitrems, indole-diterpene mycotoxins that are potent tremorgens in mammals, and are synthesized by clavicipitaceous fungal endophytes in association with their grass hosts. The geranylgeranyl diphosphate (GGPP) synthase ltmG is proposed to catalyze the first step in lolitrem biosynthesis. LtmG catalyzes a series of iterative condensations of isopentenyl diphosphate (IPP) with dimethylallyl diphosphate (DMAPP), geranyl diphosphate (GPP), and farnesyl diphosphate (FPP), to form GGPP. GGPP then condenses with indole-3-glycerol phosphate to form 3-geranylgeranylindole, an acyclic intermediate, to be incorporated into paxilline. Either ltmG or ltmC could be responsible for this step, as both are putative prenyl transferases. The FAD-dependent monooxygenase ltmM then catalyzes the epoxidation of the two terminal alkenes of the geranylgeranyl moiety, which is subsequently cyclized by ltmB, to paspaline. The cytochrome P450 monooxygenases ltmQ and ltmP can sequentially oxidize paspaline to terpendole E and terpendole F. Alternatively, ltmP converts paspaline to an intermediate which is oxidized by ltmQ to terpendole F. LtmF, ltmK, ltmE and ltmJ appear to be unique to the epichloe endophytes. The prenyltransferase ltmF is involved in the 27-hydroxyl-O-prenylation. The cytochrome P450 monooxygenase ltmK is required for the oxidative acetal ring formation. The multi-functional prenyltransferase ltmE is required for C20- and C21-prenylations of the indole ring of paspalanes and acts together with the cytochrome P450 monooxygenase ltmJ to yield lolitremanes by multiple oxidations and ring closures. The stereoisomer pairs of lolitriol and lolitrem N or lolitrem B and lolitrem F may be attributed to variations in the way in which ring closure can occur under the action of ltmJ. While the major product of this pathway is lolitrem B, the prenyl transferases and cytochrome P450 monooxygenases identified in this pathway have a remarkable versatility in their regio- and stereo-specificities to generate a diverse range of metabolites that are products of a metabolic grid rather than a linear pathway. The protein is Terpene cyclase ltmB of Epichloe festucae var. lolii (Neotyphodium lolii).